Here is a 303-residue protein sequence, read N- to C-terminus: Polyisoprenyl-teichoic acid--peptidoglycan teichoic acid transferase TagU (303 aa).

Topologically, residues 1-4 (MKKK) are cytoplasmic. A helical; Signal-anchor for type II membrane protein membrane pass occupies residues 5-25 (ILFWVLGILGVLIIGGGIYAY). Topologically, residues 26–303 (NVYSSVSNTL…KLRTHLEVTK (278 aa)) are extracellular.

This sequence belongs to the LytR/CpsA/Psr (LCP) family.

Its subcellular location is the cell membrane. The protein operates within cell wall biogenesis. Functionally, may catalyze the final step in cell wall teichoic acid biosynthesis, the transfer of the anionic cell wall polymers (APs) from their lipid-linked precursor to the cell wall peptidoglycan (PG). The polypeptide is Polyisoprenyl-teichoic acid--peptidoglycan teichoic acid transferase TagU (Bacillus cereus (strain ZK / E33L)).